Consider the following 333-residue polypeptide: Galactinol synthase 1 (333 aa).

Residue Lys-104 is part of the active site. Mn(2+)-binding residues include Asp-120, Asp-122, and His-257.

Belongs to the glycosyltransferase 8 family. Galactosyltransferase subfamily. Requires a divalent metal cation as cofactor. Expressed in source leaves, specifically in the mesophyll.

The protein localises to the cytoplasm. It catalyses the reaction myo-inositol + UDP-alpha-D-galactose = alpha-D-galactosyl-(1-&gt;3)-1D-myo-inositol + UDP + H(+). Functionally, major galactinol synthase mainly involved in the biosynthesis of storage raffinose family oligosaccharides (RFOs) that function as osmoprotectants. May promote plant stress tolerance. The chain is Galactinol synthase 1 (GOLS1) from Ajuga reptans (Bugle).